Here is a 78-residue protein sequence, read N- to C-terminus: UPF0235 protein AF_2072 (78 aa).

Belongs to the UPF0235 family.

In Archaeoglobus fulgidus (strain ATCC 49558 / DSM 4304 / JCM 9628 / NBRC 100126 / VC-16), this protein is UPF0235 protein AF_2072.